Consider the following 508-residue polypeptide: 6-phosphogluconate dehydrogenase, decarboxylating 2, chloroplastic (508 aa).

Residues 1 to 12 (MASPAPAPPAAS) constitute a chloroplast transit peptide. Residues 28 to 33 (GLATMG), 51 to 53 (NRT), 95 to 97 (VQA), and Asn-123 contribute to the NADP(+) site. Substrate contacts are provided by residues Asn-123 and 149–151 (SGG). Lys-203 serves as the catalytic Proton acceptor. Position 206–207 (206–207 (HN)) interacts with substrate. The Proton donor role is filled by Glu-210. Residues Tyr-211, Lys-284, Arg-311, Arg-475, and His-481 each coordinate substrate.

The protein belongs to the 6-phosphogluconate dehydrogenase family. In terms of assembly, homodimer.

It is found in the plastid. It localises to the chloroplast. It catalyses the reaction 6-phospho-D-gluconate + NADP(+) = D-ribulose 5-phosphate + CO2 + NADPH. It functions in the pathway carbohydrate degradation; pentose phosphate pathway; D-ribulose 5-phosphate from D-glucose 6-phosphate (oxidative stage): step 3/3. Functionally, catalyzes the oxidative decarboxylation of 6-phosphogluconate to ribulose 5-phosphate and CO(2), with concomitant reduction of NADP to NADPH. This Oryza sativa subsp. japonica (Rice) protein is 6-phosphogluconate dehydrogenase, decarboxylating 2, chloroplastic (G6PGH2).